The sequence spans 155 residues: 6,7-dimethyl-8-ribityllumazine synthase (155 aa).

5-amino-6-(D-ribitylamino)uracil-binding positions include Phe-22, 56 to 58 (AFE), and 80 to 82 (AVI). 85 to 86 (ST) contacts (2S)-2-hydroxy-3-oxobutyl phosphate. The active-site Proton donor is His-88. Residue Phe-113 participates in 5-amino-6-(D-ribitylamino)uracil binding. A (2S)-2-hydroxy-3-oxobutyl phosphate-binding site is contributed by Arg-127.

The protein belongs to the DMRL synthase family.

The catalysed reaction is (2S)-2-hydroxy-3-oxobutyl phosphate + 5-amino-6-(D-ribitylamino)uracil = 6,7-dimethyl-8-(1-D-ribityl)lumazine + phosphate + 2 H2O + H(+). It participates in cofactor biosynthesis; riboflavin biosynthesis; riboflavin from 2-hydroxy-3-oxobutyl phosphate and 5-amino-6-(D-ribitylamino)uracil: step 1/2. Catalyzes the formation of 6,7-dimethyl-8-ribityllumazine by condensation of 5-amino-6-(D-ribitylamino)uracil with 3,4-dihydroxy-2-butanone 4-phosphate. This is the penultimate step in the biosynthesis of riboflavin. The polypeptide is 6,7-dimethyl-8-ribityllumazine synthase (Caldicellulosiruptor bescii (strain ATCC BAA-1888 / DSM 6725 / KCTC 15123 / Z-1320) (Anaerocellum thermophilum)).